The chain runs to 790 residues: Alpha,alpha-trehalose-phosphate synthase [UDP-forming] B (790 aa).

It in the N-terminal section; belongs to the glycosyltransferase 20 family. The protein in the C-terminal section; belongs to the trehalose phosphatase family.

It catalyses the reaction D-glucose 6-phosphate + UDP-alpha-D-glucose = alpha,alpha-trehalose 6-phosphate + UDP + H(+). Functionally, synthesizes trehalose 6-phosphate, the precursor for the production of trehalose, the main carbohydrate storage reserve of the dormant spore. Trehalose accumulates in both prestalk and prespore cells and then is rapidly metabolized during terminal differentiation of stalk cells, while being stored in spores, where it serves as the principal energy and carbon source for germination. This Dictyostelium discoideum (Social amoeba) protein is Alpha,alpha-trehalose-phosphate synthase [UDP-forming] B (tpsB).